The sequence spans 84 residues: Large ribosomal subunit protein bL27 (84 aa).

The tract at residues 1–21 (MAHKKAGGSTRNGRDSNPKYL) is disordered.

Belongs to the bacterial ribosomal protein bL27 family.

This Francisella tularensis subsp. holarctica (strain FTNF002-00 / FTA) protein is Large ribosomal subunit protein bL27.